We begin with the raw amino-acid sequence, 507 residues long: Cytochrome P450 3A28 (507 aa).

Residue cysteine 442 participates in heme binding.

It belongs to the cytochrome P450 family. The cofactor is heme.

It is found in the endoplasmic reticulum membrane. It localises to the microsome membrane. It carries out the reaction an organic molecule + reduced [NADPH--hemoprotein reductase] + O2 = an alcohol + oxidized [NADPH--hemoprotein reductase] + H2O + H(+). Cytochromes P450 are a group of heme-thiolate monooxygenases. In liver microsomes, this enzyme is involved in an NADPH-dependent electron transport pathway. It oxidizes a variety of structurally unrelated compounds, including steroids, fatty acids, and xenobiotics. The sequence is that of Cytochrome P450 3A28 (CYP3A28) from Bos taurus (Bovine).